The chain runs to 102 residues: Putative ubiquitin-like protein FUBI-like protein ENSP00000310146 (102 aa).

The Ubiquitin-like domain maps to 23–99; it reads LCPQVAYVRA…LEVVGRRLGV (77 aa).

The sequence is that of Putative ubiquitin-like protein FUBI-like protein ENSP00000310146 from Homo sapiens (Human).